The following is a 163-amino-acid chain: NADH-quinone oxidoreductase subunit I (163 aa).

2 4Fe-4S ferredoxin-type domains span residues 53–83 (LRRYPNGEERCIACKLCEAICPAQAITIEAG) and 94–123 (VRYDIDMVKCIYCGFCQEACPVDAIVEGPN). C63, C66, C69, C73, C103, C106, C109, and C113 together coordinate [4Fe-4S] cluster.

The protein belongs to the complex I 23 kDa subunit family. NDH-1 is composed of 14 different subunits. Subunits NuoA, H, J, K, L, M, N constitute the membrane sector of the complex. The cofactor is [4Fe-4S] cluster.

The protein resides in the cell inner membrane. It carries out the reaction a quinone + NADH + 5 H(+)(in) = a quinol + NAD(+) + 4 H(+)(out). Its function is as follows. NDH-1 shuttles electrons from NADH, via FMN and iron-sulfur (Fe-S) centers, to quinones in the respiratory chain. The immediate electron acceptor for the enzyme in this species is believed to be ubiquinone. Couples the redox reaction to proton translocation (for every two electrons transferred, four hydrogen ions are translocated across the cytoplasmic membrane), and thus conserves the redox energy in a proton gradient. The chain is NADH-quinone oxidoreductase subunit I from Brucella suis (strain ATCC 23445 / NCTC 10510).